The primary structure comprises 754 residues: Condensin complex subunit 2 (754 aa).

Positions 104 to 149 are disordered; the sequence is LAQRKTNGASNGDDSNGGNGEGLGGDSDEANIEIDPLTGMPISNDP. Over residues 118 to 128 the composition is skewed to gly residues; it reads SNGGNGEGLGG. Serine 245 is modified (phosphoserine). A disordered region spans residues 359–379; it reads CYPDENHDNTSHDEQDDDNVN. Over residues 362 to 371 the composition is skewed to basic and acidic residues; sequence DENHDNTSHD. At serine 548 the chain carries Phosphoserine. Residues 665–688 form a disordered region; the sequence is HDSRKNREQSSNDSETHTEDESTK.

This sequence belongs to the CND2 (condensin subunit 2) family. Component of the condensin complex, which contains the SMC2 and SMC4 heterodimer, and three non SMC subunits that probably regulate the complex: BRN1, YCS4 and YCG1/YCS5.

It is found in the nucleus. The protein resides in the cytoplasm. Its subcellular location is the chromosome. Regulatory subunit of the condensin complex, a complex required for conversion of interphase chromatin into mitotic-like condense chromosomes. The condensin complex probably introduces positive supercoils into relaxed DNA in the presence of type I topoisomerases and converts nicked DNA into positive knotted forms in the presence of type II topoisomerases. The condensin complex probably also plays a role during interphase. The polypeptide is Condensin complex subunit 2 (BRN1) (Saccharomyces cerevisiae (strain ATCC 204508 / S288c) (Baker's yeast)).